We begin with the raw amino-acid sequence, 647 residues long: Chaperone protein DnaK (647 aa).

Residue Thr200 is modified to Phosphothreonine; by autocatalysis. Residues 611–631 show a composition bias toward low complexity; that stretch reads AGEQGAAGAAGAGAQQQAQPQ. The interval 611–647 is disordered; sequence AGEQGAAGAAGAGAQQQAQPQDDNVVDAEFKEVNDKK. Residues 638-647 are compositionally biased toward basic and acidic residues; the sequence is AEFKEVNDKK.

The protein belongs to the heat shock protein 70 family.

In terms of biological role, acts as a chaperone. This chain is Chaperone protein DnaK, found in Cupriavidus taiwanensis (strain DSM 17343 / BCRC 17206 / CCUG 44338 / CIP 107171 / LMG 19424 / R1) (Ralstonia taiwanensis (strain LMG 19424)).